The sequence spans 508 residues: Photosystem II CP47 reaction center protein (508 aa).

Transmembrane regions (helical) follow at residues 21 to 36 (SVHI…WAGS), 101 to 115 (IVFS…IWHW), 140 to 156 (GIHL…FGAF), 203 to 218 (IAAG…FHLS), 237 to 252 (VLSS…AFVV), and 457 to 472 (SFAL…HGSR).

Belongs to the PsbB/PsbC family. PsbB subfamily. As to quaternary structure, PSII is composed of 1 copy each of membrane proteins PsbA, PsbB, PsbC, PsbD, PsbE, PsbF, PsbH, PsbI, PsbJ, PsbK, PsbL, PsbM, PsbT, PsbX, PsbY, PsbZ, Psb30/Ycf12, at least 3 peripheral proteins of the oxygen-evolving complex and a large number of cofactors. It forms dimeric complexes. It depends on Binds multiple chlorophylls. PSII binds additional chlorophylls, carotenoids and specific lipids. as a cofactor.

The protein localises to the plastid. The protein resides in the chloroplast thylakoid membrane. Its function is as follows. One of the components of the core complex of photosystem II (PSII). It binds chlorophyll and helps catalyze the primary light-induced photochemical processes of PSII. PSII is a light-driven water:plastoquinone oxidoreductase, using light energy to abstract electrons from H(2)O, generating O(2) and a proton gradient subsequently used for ATP formation. This chain is Photosystem II CP47 reaction center protein, found in Lepidium virginicum (Virginia pepperweed).